The primary structure comprises 114 residues: Large ribosomal subunit protein bL20c (114 aa).

Belongs to the bacterial ribosomal protein bL20 family.

The protein localises to the plastid. It localises to the chloroplast. Binds directly to 23S ribosomal RNA and is necessary for the in vitro assembly process of the 50S ribosomal subunit. It is not involved in the protein synthesizing functions of that subunit. The protein is Large ribosomal subunit protein bL20c of Psilotum nudum (Whisk fern).